The primary structure comprises 651 residues: 120 kDa Glycoprotein O (651 aa).

The signal sequence occupies residues 1-56 (MHLEVIVQSYKKSKYYFSHTFYLYKFIVVNSPDMLHISQLGLFLGLFAIVMHSANL). 7 N-linked (GlcNAc...) asparagine; by host glycosylation sites follow: asparagine 74, asparagine 97, asparagine 147, asparagine 208, asparagine 223, asparagine 234, and asparagine 254. The span at 275–292 (SSTSASLTSPHIPSTNIP) shows a compositional bias: low complexity. The segment at 275-303 (SSTSASLTSPHIPSTNIPTPEPPPVTKNS) is disordered. N-linked (GlcNAc...) asparagine; by host glycosylation is found at asparagine 302, asparagine 355, asparagine 378, asparagine 395, asparagine 469, asparagine 502, asparagine 520, asparagine 546, asparagine 603, asparagine 620, and asparagine 631.

It belongs to the herpesviridae U47 family. As to quaternary structure, part of a gH-gL-gO complex. Post-translationally, a shorter mature protein, gO-80K, is produced probably by proteolytic cleavage. In terms of processing, modified with high mannose-oligosaccharides. N-glycosylated with complex glycans.

The protein resides in the virion. The protein localises to the host cell membrane. This Homo sapiens (Human) protein is 120 kDa Glycoprotein O (U47).